Here is a 142-residue protein sequence, read N- to C-terminus: Transcription antitermination protein NusB (142 aa).

Belongs to the NusB family.

Functionally, involved in transcription antitermination. Required for transcription of ribosomal RNA (rRNA) genes. Binds specifically to the boxA antiterminator sequence of the ribosomal RNA (rrn) operons. The protein is Transcription antitermination protein NusB of Roseiflexus sp. (strain RS-1).